Consider the following 157-residue polypeptide: Tuberoinfundibular peptide of 39 residues (157 aa).

The first 25 residues, 1-25 (MALSLPPRPALLFLVLMSVTLMASA), serve as a signal peptide directing secretion. The propeptide occupies 26 to 116 (FPQPQLRPLQ…DWPSRVGHQQ (91 aa)).

The protein belongs to the parathyroid hormone family.

It is found in the secreted. Its function is as follows. Plays a role as a potent and selective agonist of pth2r resulting in adenyl cyclase activation and intracellular calcium level elevation. This is Tuberoinfundibular peptide of 39 residues from Danio rerio (Zebrafish).